Reading from the N-terminus, the 361-residue chain is Mitochondrial fission regulator 2 (361 aa).

Serine 137 carries the post-translational modification Phosphoserine. Disordered regions lie at residues 191–286 and 298–322; these read FIDL…VPNM and LRPV…EWDP. Pro residues predominate over residues 219–231; sequence VLPPPPPPPPPPQ. The segment covering 232-244 has biased composition (low complexity); it reads FSLQPPSSLPMQP. Residues 250–282 are compositionally biased toward basic and acidic residues; it reads HDIDSLATEMERQLSGVKKTDDSHHSKSQRLRD. Phosphoserine occurs at positions 304 and 340.

The protein belongs to the MTFR1 family. Expressed predominantly in testis (at protein level). Expressed to a lower extent in spleen.

It is found in the mitochondrion. In terms of biological role, may play a role in mitochondrial aerobic respiration essentially in the testis. Can also promote mitochondrial fission. The sequence is that of Mitochondrial fission regulator 2 (Mtfr2) from Mus musculus (Mouse).